The sequence spans 248 residues: Adenylate kinase isoenzyme 6 homolog HBR1 (248 aa).

ATP contacts are provided by Gly-19, Gly-21, Lys-22, Ser-23, and Ser-24. Residues Asn-49–Val-72 form an NMPbind region. The segment at Thr-124–Glu-134 is LID. Arg-125 is a binding site for ATP. The segment at Asp-188–Gln-248 is disordered. A compositionally biased stretch (acidic residues) spans Asp-202–Glu-238. The span at Glu-239 to Gln-248 shows a compositional bias: basic and acidic residues.

This sequence belongs to the adenylate kinase family. AK6 subfamily. Interacts with small ribosomal subunit protein uS11. Not a structural component of 43S pre-ribosomes, but transiently interacts with them by binding to uS11.

It localises to the cytoplasm. The protein localises to the nucleus. The enzyme catalyses AMP + ATP = 2 ADP. It catalyses the reaction ATP + H2O = ADP + phosphate + H(+). Broad-specificity nucleoside monophosphate (NMP) kinase that catalyzes the reversible transfer of the terminal phosphate group between nucleoside triphosphates and monophosphates. Also has ATPase activity. Involved in the late cytoplasmic maturation steps of the 40S ribosomal particles, specifically 18S rRNA maturation. While NMP activity is not required for ribosome maturation, ATPase activity is. Associates transiently with small ribosomal subunit protein uS11. ATP hydrolysis breaks the interaction with uS11. May temporarily remove uS11 from the ribosome to enable a conformational change of the ribosomal RNA that is needed for the final maturation step of the small ribosomal subunit. Its NMP activity may have a role in nuclear energy homeostasis. Induces transcription of mating-type proteins ALPHA1 and ALPHA2 and moderately represses transcription of mating-type protein A1 in response to hemoglobin and growth signals. Involved in the induction of a high affinity fibronectin receptor by sub-inhibitory dosages of caspofungin. This Candida albicans (strain SC5314 / ATCC MYA-2876) (Yeast) protein is Adenylate kinase isoenzyme 6 homolog HBR1 (HBR1).